The following is a 602-amino-acid chain: Ligand-dependent nuclear receptor corepressor-like protein (602 aa).

Positions 104-124 (PSLDSSQSTPTEELSSQGQSN) are disordered. Residues 106-124 (LDSSQSTPTEELSSQGQSN) are compositionally biased toward polar residues. Residues K242, K319, K340, and K397 each participate in a glycyl lysine isopeptide (Lys-Gly) (interchain with G-Cter in SUMO2) cross-link. Disordered stretches follow at residues 495 to 521 (TVDGTSENTEDGLDRKDSKQPRKKRGR) and 564 to 602 (ERSGTLKTPPKKKLRLPDTGLYNMTDSGTGSCKNSSKPV). The HTH psq-type domain occupies 516–568 (RKKRGRYRQYDHEIMEEAIAMVMSGKMSVSKAQGIYGVPHSTLEYKVKERSGT). The H-T-H motif DNA-binding region spans 544–564 (VSKAQGIYGVPHSTLEYKVKE). Over residues 585-602 (YNMTDSGTGSCKNSSKPV) the composition is skewed to polar residues.

It localises to the nucleus. Functionally, may act as transcription activator that binds DNA elements with the sequence 5'-CCCTATCGATCGATCTCTACCT-3'. May play a role in spermatogenesis. This Homo sapiens (Human) protein is Ligand-dependent nuclear receptor corepressor-like protein (LCORL).